Reading from the N-terminus, the 171-residue chain is AN1-type zinc finger protein 2A (171 aa).

2 consecutive AN1-type zinc fingers follow at residues 4 to 52 (PDLG…KKDV) and 94 to 142 (KVFT…SSVS). C10, C15, C25, C28, C33, H36, H42, C44, C100, C105, C115, C118, C123, H126, H132, and C134 together coordinate Zn(2+). The tract at residues 135 to 171 (QAGSSSVSRGRSSASRAAEQKPSGVSWLAQRLRRTVK) is disordered. The span at 136–151 (AGSSSVSRGRSSASRA) shows a compositional bias: low complexity.

It localises to the cytoplasm. It is found in the nucleus. The protein is AN1-type zinc finger protein 2A (Zfand2a) of Rattus norvegicus (Rat).